Here is a 101-residue protein sequence, read N- to C-terminus: Urease subunit beta (101 aa).

The protein belongs to the urease beta subunit family. In terms of assembly, heterotrimer of UreA (gamma), UreB (beta) and UreC (alpha) subunits. Three heterotrimers associate to form the active enzyme.

It is found in the cytoplasm. The catalysed reaction is urea + 2 H2O + H(+) = hydrogencarbonate + 2 NH4(+). Its pathway is nitrogen metabolism; urea degradation; CO(2) and NH(3) from urea (urease route): step 1/1. In Jannaschia sp. (strain CCS1), this protein is Urease subunit beta.